The chain runs to 59 residues: Large ribosomal subunit protein uL30 (59 aa).

The protein belongs to the universal ribosomal protein uL30 family. In terms of assembly, part of the 50S ribosomal subunit.

This is Large ribosomal subunit protein uL30 from Hydrogenobaculum sp. (strain Y04AAS1).